The sequence spans 411 residues: Arginine biosynthesis bifunctional protein ArgJ (411 aa).

The substrate site is built by threonine 160, lysine 186, threonine 197, glutamate 283, asparagine 406, and threonine 411. Catalysis depends on threonine 197, which acts as the Nucleophile.

The protein belongs to the ArgJ family. In terms of assembly, heterotetramer of two alpha and two beta chains.

The protein localises to the cytoplasm. The enzyme catalyses N(2)-acetyl-L-ornithine + L-glutamate = N-acetyl-L-glutamate + L-ornithine. It catalyses the reaction L-glutamate + acetyl-CoA = N-acetyl-L-glutamate + CoA + H(+). It functions in the pathway amino-acid biosynthesis; L-arginine biosynthesis; L-ornithine and N-acetyl-L-glutamate from L-glutamate and N(2)-acetyl-L-ornithine (cyclic): step 1/1. Its pathway is amino-acid biosynthesis; L-arginine biosynthesis; N(2)-acetyl-L-ornithine from L-glutamate: step 1/4. With respect to regulation, feedback inhibition by L-ornithine. Catalyzes two activities which are involved in the cyclic version of arginine biosynthesis: the synthesis of N-acetylglutamate from glutamate and acetyl-CoA as the acetyl donor, and of ornithine by transacetylation between N(2)-acetylornithine and glutamate. This is Arginine biosynthesis bifunctional protein ArgJ from Halalkalibacterium halodurans (strain ATCC BAA-125 / DSM 18197 / FERM 7344 / JCM 9153 / C-125) (Bacillus halodurans).